Consider the following 771-residue polypeptide: ATP-dependent DNA helicase UvrD1 (771 aa).

Residues 1-21 (MSVHATDAKPPGPSPADQLLD) form a disordered region. In terms of domain architecture, UvrD-like helicase ATP-binding spans 21–311 (DGLNPQQRQA…ILLEQNYRST (291 aa)). ATP contacts are provided by residues 45–50 (GSGKTA) and Arg-309. One can recognise a UvrD-like helicase C-terminal domain in the interval 312-603 (QNILSAANSV…TLMTLHTAKG (292 aa)). The tract at residues 691 to 716 (FSAPVSGAGRFGSARPSPTRSGASRR) is disordered.

Belongs to the helicase family. UvrD subfamily. Monomer. The cofactor is Mg(2+).

The catalysed reaction is Couples ATP hydrolysis with the unwinding of duplex DNA by translocating in the 3'-5' direction.. It carries out the reaction ATP + H2O = ADP + phosphate + H(+). Functionally, DNA-dependent ATPase, acting on dsDNA with a 3'-ssDNA tail, unwinding with 3'-to 5'-polarity. Also highly efficient on nicked DNA. Involved in the post-incision events of nucleotide excision repair. The chain is ATP-dependent DNA helicase UvrD1 (uvrD1) from Mycobacterium bovis (strain ATCC BAA-935 / AF2122/97).